We begin with the raw amino-acid sequence, 218 residues long: Dehydration-responsive element-binding protein 1B (218 aa).

The tract at residues 1–26 (MEVEEAAYRTVWSEPPKRPAGRTKFR) is disordered. Residues 32 to 95 (VYRGVRRRGG…RGRAACLNFA (64 aa)) constitute a DNA-binding region (AP2/ERF). A disordered region spans residues 131–151 (SAAPSSPAETFANDGDEEEDN).

The protein belongs to the AP2/ERF transcription factor family. ERF subfamily.

The protein localises to the nucleus. In terms of biological role, transcriptional activator that binds specifically to the DNA sequence 5'-[AG]CCGAC-3'. Binding to the C-repeat/DRE element mediates high salinity- and dehydration-inducible transcription. Confers resistance to high salt, cold and drought stress. This Oryza sativa subsp. japonica (Rice) protein is Dehydration-responsive element-binding protein 1B (DREB1B).